The primary structure comprises 91 residues: Large ribosomal subunit protein eL34 (91 aa).

It belongs to the eukaryotic ribosomal protein eL34 family.

This Thermofilum pendens (strain DSM 2475 / Hrk 5) protein is Large ribosomal subunit protein eL34.